Consider the following 118-residue polypeptide: uncharacterized protein (118 aa).

This is an uncharacterized protein from Methanocaldococcus jannaschii (strain ATCC 43067 / DSM 2661 / JAL-1 / JCM 10045 / NBRC 100440) (Methanococcus jannaschii).